The following is a 224-amino-acid chain: MERPYVIIVSEVSVDGKLTLYRGASSKELMSLMDEEAYKYLHEIRAKVDGIMVGCETVRTDNPSLTVRYAKGKNPVRIIPCSTANVPLDANVLNTKEAPTIIATTERAPKERLEKIKELGAEVIVVGDELVDFDKLLPELYRRGIKSLMVEGGASINWEFVRRRVVDEIRLIHLPVIVGGENVPTLVGGEGFKKLKNLLHLRLRSHFVRGKQLITEWEVVNKIR.

NADP(+)-binding positions include threonine 57, aspartate 61, 82-85 (STAN), valine 131, and 153-156 (GASI).

It belongs to the HTP reductase family. In terms of assembly, homodimer.

The catalysed reaction is 2,5-diamino-6-(1-D-ribitylamino)pyrimidin-4(3H)-one 5'-phosphate + NADP(+) = 2,5-diamino-6-(1-D-ribosylamino)pyrimidin-4(3H)-one 5'-phosphate + NADPH + H(+). It catalyses the reaction 2,5-diamino-6-(1-D-ribitylamino)pyrimidin-4(3H)-one 5'-phosphate + NAD(+) = 2,5-diamino-6-(1-D-ribosylamino)pyrimidin-4(3H)-one 5'-phosphate + NADH + H(+). The protein operates within cofactor biosynthesis; riboflavin biosynthesis. Catalyzes an early step in riboflavin biosynthesis, the NADPH-dependent reduction of the ribose side chain of 2,5-diamino-6-ribosylamino-4(3H)-pyrimidinone 5'-phosphate, yielding 2,5-diamino-6-ribitylamino-4(3H)-pyrimidinone 5'-phosphate. The chain is 2,5-diamino-6-ribosylamino-4(3H)-pyrimidinone 5'-phosphate reductase (ribD2) from Aquifex aeolicus (strain VF5).